The following is a 504-amino-acid chain: Malonyl-CoA decarboxylase, mitochondrial (504 aa).

A mitochondrion-targeting transit peptide spans 1–50 (MRGLRRGLSRLGPRLGPWAVPRSLRRVLRAAGPWRGQSSAGSVSERGGAS). The segment at 51 to 201 (MEEVLSRSVP…VLKNMLSEWF (151 aa)) is alpha-helical domain. Residues 202-504 (STGFLNLERV…VSQFQQNSKL (303 aa)) form a catalytic domain region. The Proton acceptor role is filled by Ser-340. His-434 acts as the Proton donor in catalysis. The Microbody targeting signal signature appears at 502–504 (SKL).

The protein resides in the mitochondrion. It localises to the cytoplasm. It is found in the peroxisome. It catalyses the reaction malonyl-CoA + H(+) = acetyl-CoA + CO2. The protein operates within metabolic intermediate biosynthesis; acetyl-CoA biosynthesis; acetyl-CoA from malonyl-CoA: step 1/1. Catalyzes the conversion of malonyl-CoA to acetyl-CoA. In the fatty acid biosynthesis MCD selectively removes malonyl-CoA and thus assures that methyl-malonyl-CoA is the only chain elongating substrate for fatty acid synthase and that fatty acids with multiple methyl side chains are produced. This Anser anser anser (Western greylag goose) protein is Malonyl-CoA decarboxylase, mitochondrial (MLYCD).